The following is a 446-amino-acid chain: Phosphoglucosamine mutase (446 aa).

The Phosphoserine intermediate role is filled by S99. S99, D242, D244, and D246 together coordinate Mg(2+). At S99 the chain carries Phosphoserine.

Belongs to the phosphohexose mutase family. The cofactor is Mg(2+). Activated by phosphorylation.

It carries out the reaction alpha-D-glucosamine 1-phosphate = D-glucosamine 6-phosphate. Its function is as follows. Catalyzes the conversion of glucosamine-6-phosphate to glucosamine-1-phosphate. This is Phosphoglucosamine mutase from Wolinella succinogenes (strain ATCC 29543 / DSM 1740 / CCUG 13145 / JCM 31913 / LMG 7466 / NCTC 11488 / FDC 602W) (Vibrio succinogenes).